A 140-amino-acid polypeptide reads, in one-letter code: 6,7-dimethyl-8-ribityllumazine synthase (140 aa).

5-amino-6-(D-ribitylamino)uracil is bound by residues Phe11, 43 to 45 (SFD), and 67 to 69 (CVI). 72-73 (DT) serves as a coordination point for (2S)-2-hydroxy-3-oxobutyl phosphate. Residue His75 is the Proton donor of the active site. Leu100 provides a ligand contact to 5-amino-6-(D-ribitylamino)uracil. A (2S)-2-hydroxy-3-oxobutyl phosphate-binding site is contributed by Arg115.

The protein belongs to the DMRL synthase family. As to quaternary structure, forms an icosahedral capsid composed of 60 subunits, arranged as a dodecamer of pentamers.

It catalyses the reaction (2S)-2-hydroxy-3-oxobutyl phosphate + 5-amino-6-(D-ribitylamino)uracil = 6,7-dimethyl-8-(1-D-ribityl)lumazine + phosphate + 2 H2O + H(+). It functions in the pathway cofactor biosynthesis; riboflavin biosynthesis; riboflavin from 2-hydroxy-3-oxobutyl phosphate and 5-amino-6-(D-ribitylamino)uracil: step 1/2. Its function is as follows. Catalyzes the formation of 6,7-dimethyl-8-ribityllumazine by condensation of 5-amino-6-(D-ribitylamino)uracil with 3,4-dihydroxy-2-butanone 4-phosphate. This is the penultimate step in the biosynthesis of riboflavin. This Methanococcus vannielii (strain ATCC 35089 / DSM 1224 / JCM 13029 / OCM 148 / SB) protein is 6,7-dimethyl-8-ribityllumazine synthase.